The following is a 178-amino-acid chain: CASP-like protein 5A1 (178 aa).

The interval 1–24 (MFASRPAVHPVEAPPPTDPVEQPT) is disordered. At 1–37 (MFASRPAVHPVEAPPPTDPVEQPTGVLMKDLPGMPGT) the chain is on the cytoplasmic side. A helical membrane pass occupies residues 38 to 58 (AGGLGLRVAQFVFAGVALAVM). Residues 59–69 (ASTSDFPSVTA) are Extracellular-facing. A helical membrane pass occupies residues 70–90 (FCYLVAATIMQCLWSFSLAIV). The Cytoplasmic portion of the chain corresponds to 91 to 105 (DIYALLVKRCLRNRR). The helical transmembrane segment at 106–126 (AVCLFAIGDGITAALTFGAAC) threads the bilayer. Topologically, residues 127–152 (SSAGITVLIDNDLNICAENHCGSFKT) are extracellular. A helical transmembrane segment spans residues 153–173 (ATALAFMSWFALTPSFLLNFW). Topologically, residues 174–178 (SMAAR) are cytoplasmic.

The protein belongs to the Casparian strip membrane proteins (CASP) family. In terms of assembly, homodimer and heterodimers.

It is found in the cell membrane. The chain is CASP-like protein 5A1 from Brachypodium distachyon (Purple false brome).